The chain runs to 328 residues: Acetaldehyde dehydrogenase 3 (328 aa).

An NAD(+)-binding site is contributed by Ser-17–Ile-20. Cys-135 acts as the Acyl-thioester intermediate in catalysis. Residues Ser-166–Asn-174 and Asn-298 contribute to the NAD(+) site.

The protein belongs to the acetaldehyde dehydrogenase family.

The catalysed reaction is acetaldehyde + NAD(+) + CoA = acetyl-CoA + NADH + H(+). This is Acetaldehyde dehydrogenase 3 from Nocardia farcinica (strain IFM 10152).